The chain runs to 610 residues: ESX-5 secretion system protein EccA5 (610 aa).

357 to 364 lines the ATP pocket; the sequence is GPPGTGKT.

Belongs to the CbxX/CfxQ family. Part of the ESX-5 / type VII secretion system (T7SS), which is composed of cytosolic and membrane components.

The protein resides in the cytoplasm. Functionally, part of the ESX-5 specialized secretion system, which is responsible for the secretion of EsxN and a number of PE_PGRS and PPE proteins. EccA5 exhibits ATPase activity and may provide energy for the export of ESX-5 substrates. This chain is ESX-5 secretion system protein EccA5, found in Mycobacterium marinum (strain ATCC BAA-535 / M).